The sequence spans 303 residues: Diaminopimelate epimerase (303 aa).

Residues asparagine 15, glutamine 47, and asparagine 67 each coordinate substrate. Catalysis depends on cysteine 76, which acts as the Proton donor. Substrate is bound by residues glycine 77–asparagine 78, asparagine 163, asparagine 197, and glutamate 215–arginine 216. The active-site Proton acceptor is cysteine 224. Glycine 225–serine 226 serves as a coordination point for substrate. The tract at residues aspartate 279–alanine 303 is disordered.

Belongs to the diaminopimelate epimerase family. In terms of assembly, homodimer.

It localises to the cytoplasm. It carries out the reaction (2S,6S)-2,6-diaminopimelate = meso-2,6-diaminopimelate. It functions in the pathway amino-acid biosynthesis; L-lysine biosynthesis via DAP pathway; DL-2,6-diaminopimelate from LL-2,6-diaminopimelate: step 1/1. Catalyzes the stereoinversion of LL-2,6-diaminopimelate (L,L-DAP) to meso-diaminopimelate (meso-DAP), a precursor of L-lysine and an essential component of the bacterial peptidoglycan. The protein is Diaminopimelate epimerase of Brucella canis (strain ATCC 23365 / NCTC 10854 / RM-666).